The chain runs to 445 residues: Phosphoglucosamine mutase (445 aa).

Residue Ser-104 is the Phosphoserine intermediate of the active site. The Mg(2+) site is built by Ser-104, Asp-243, Asp-245, and Asp-247. Position 104 is a phosphoserine (Ser-104).

It belongs to the phosphohexose mutase family. Requires Mg(2+) as cofactor. Activated by phosphorylation.

The catalysed reaction is alpha-D-glucosamine 1-phosphate = D-glucosamine 6-phosphate. In terms of biological role, catalyzes the conversion of glucosamine-6-phosphate to glucosamine-1-phosphate. The protein is Phosphoglucosamine mutase of Neisseria subflava.